Consider the following 286-residue polypeptide: Protease HtpX homolog (286 aa).

The next 2 helical transmembrane spans lie at 7 to 27 and 29 to 49; these read TFMLMAAITALFIVIGGMIGG and SGMMLALLFALGMNFFSYWFS. His131 serves as a coordination point for Zn(2+). Residue Glu132 is part of the active site. Residue His135 coordinates Zn(2+). The next 2 membrane-spanning stretches (helical) occupy residues 146-166 and 177-197; these read LSATMAGAISALANFAVFFGG and IAGIAVAILAPLAASLIQMAI. Glu202 contacts Zn(2+).

This sequence belongs to the peptidase M48B family. Zn(2+) serves as cofactor.

It localises to the cell inner membrane. The polypeptide is Protease HtpX homolog (Ralstonia nicotianae (strain ATCC BAA-1114 / GMI1000) (Ralstonia solanacearum)).